Reading from the N-terminus, the 515-residue chain is Protein aaim-1 (515 aa).

A signal peptide spans 1–16; that stretch reads MRLLFFFSILYTASLC. Asn-46 and Asn-127 each carry an N-linked (GlcNAc...) asparagine glycan. Residues 248-267 are disordered; the sequence is RRTDPNSKFKPRPTTSQSNG. Residue Asn-447 is glycosylated (N-linked (GlcNAc...) asparagine).

In terms of tissue distribution, expressed in the terminal bulb of the pharynx and the posterior of the intestine (at protein level). Expressed by intestinal cells and secreted into the intestinal lumen (at protein level).

Its subcellular location is the secreted. Functionally, plays a role in promoting resistance to bacterial pathogens such as P.aeruginosa by inhibiting bacterial intestinal colonization. (Microbial infection) Promotes infection by microsporidian pathogens such as N.parisii in the early larval stages of development. Involved in ensuring the proper orientation and location of the spore proteins of N.parisii during intestinal cell invasion. This Caenorhabditis elegans protein is Protein aaim-1.